The following is a 717-amino-acid chain: Fatty acid oxidation complex subunit alpha (717 aa).

The enoyl-CoA hydratase/isomerase stretch occupies residues 1-190 (MIHAGNAITV…KDGAVDAVVA (190 aa)). A substrate-binding site is contributed by D298. The segment at 313–717 (HPVNQAAVLG…MAANNKKFYG (405 aa)) is 3-hydroxyacyl-CoA dehydrogenase. NAD(+) is bound by residues M326, D345, 402–404 (VTE), K409, and S431. The active-site For 3-hydroxyacyl-CoA dehydrogenase activity is H452. N455 provides a ligand contact to NAD(+). N502 serves as a coordination point for substrate.

This sequence in the N-terminal section; belongs to the enoyl-CoA hydratase/isomerase family. The protein in the C-terminal section; belongs to the 3-hydroxyacyl-CoA dehydrogenase family. In terms of assembly, heterotetramer of two alpha chains (FadB) and two beta chains (FadA).

It carries out the reaction a (3S)-3-hydroxyacyl-CoA + NAD(+) = a 3-oxoacyl-CoA + NADH + H(+). The catalysed reaction is a (3S)-3-hydroxyacyl-CoA = a (2E)-enoyl-CoA + H2O. It catalyses the reaction a 4-saturated-(3S)-3-hydroxyacyl-CoA = a (3E)-enoyl-CoA + H2O. The enzyme catalyses (3S)-3-hydroxybutanoyl-CoA = (3R)-3-hydroxybutanoyl-CoA. It carries out the reaction a (3Z)-enoyl-CoA = a 4-saturated (2E)-enoyl-CoA. The catalysed reaction is a (3E)-enoyl-CoA = a 4-saturated (2E)-enoyl-CoA. The protein operates within lipid metabolism; fatty acid beta-oxidation. Its function is as follows. Involved in the aerobic and anaerobic degradation of long-chain fatty acids via beta-oxidation cycle. Catalyzes the formation of 3-oxoacyl-CoA from enoyl-CoA via L-3-hydroxyacyl-CoA. It can also use D-3-hydroxyacyl-CoA and cis-3-enoyl-CoA as substrate. In Acinetobacter baumannii (strain ACICU), this protein is Fatty acid oxidation complex subunit alpha.